Here is a 286-residue protein sequence, read N- to C-terminus: Toxin zeta (286 aa).

Residue 39–46 participates in ATP binding; sequence GQPGSGKT. Positions 249-286 are disordered; that stretch reads MVQNQHQETPEFKAIQQKMESLQPPTPPIPKTPKLPGI. A compositionally biased stretch (pro residues) spans 272 to 286; it reads PPTPPIPKTPKLPGI.

This sequence belongs to the zeta toxin family. As to quaternary structure, in the presence of the epsilon antitoxin, forms an inactive PezA(2)PezT(2) heterotetramer.

It carries out the reaction UDP-N-acetyl-alpha-D-glucosamine + ATP = UDP-N-acetyl-alpha-D-glucosamine 3'-phosphate + ADP + H(+). Its function is as follows. Toxic component of a type II toxin-antitoxin (TA) system. Phosphorylates UDP-N-acetyl-D-glucosamine (UNAG) on the 3'-hydroxyl group of the N-acetyl-D-glucosamine moiety, yielding UNAG-3P. UNAG-3P inhibits MurA, the first committed step in cell wall synthesis, which is then blocked. Phosphorylation is inhibited by cognate epsilon antitoxin. Part of a postsegregational killing (PSK) system involved in the killing of plasmid-free cells. The zeta toxin induces programmed cell death. This chain is Toxin zeta, found in Enterococcus hirae.